We begin with the raw amino-acid sequence, 171 residues long: Large ribosomal subunit protein uL10 (171 aa).

Belongs to the universal ribosomal protein uL10 family. In terms of assembly, part of the ribosomal stalk of the 50S ribosomal subunit. The N-terminus interacts with L11 and the large rRNA to form the base of the stalk. The C-terminus forms an elongated spine to which L12 dimers bind in a sequential fashion forming a multimeric L10(L12)X complex.

Forms part of the ribosomal stalk, playing a central role in the interaction of the ribosome with GTP-bound translation factors. This is Large ribosomal subunit protein uL10 from Corynebacterium glutamicum (strain ATCC 13032 / DSM 20300 / JCM 1318 / BCRC 11384 / CCUG 27702 / LMG 3730 / NBRC 12168 / NCIMB 10025 / NRRL B-2784 / 534).